We begin with the raw amino-acid sequence, 107 residues long: Large ribosomal subunit protein uL24 (107 aa).

Belongs to the universal ribosomal protein uL24 family. In terms of assembly, part of the 50S ribosomal subunit.

Its function is as follows. One of two assembly initiator proteins, it binds directly to the 5'-end of the 23S rRNA, where it nucleates assembly of the 50S subunit. In terms of biological role, one of the proteins that surrounds the polypeptide exit tunnel on the outside of the subunit. The protein is Large ribosomal subunit protein uL24 of Nitratidesulfovibrio vulgaris (strain ATCC 29579 / DSM 644 / CCUG 34227 / NCIMB 8303 / VKM B-1760 / Hildenborough) (Desulfovibrio vulgaris).